Consider the following 570-residue polypeptide: Proline--tRNA ligase (570 aa).

Positions 238 to 257 are disordered; the sequence is ARPAPAEHAEPRPLEKVETP.

It belongs to the class-II aminoacyl-tRNA synthetase family. ProS type 1 subfamily. Homodimer.

The protein resides in the cytoplasm. It carries out the reaction tRNA(Pro) + L-proline + ATP = L-prolyl-tRNA(Pro) + AMP + diphosphate. Catalyzes the attachment of proline to tRNA(Pro) in a two-step reaction: proline is first activated by ATP to form Pro-AMP and then transferred to the acceptor end of tRNA(Pro). As ProRS can inadvertently accommodate and process non-cognate amino acids such as alanine and cysteine, to avoid such errors it has two additional distinct editing activities against alanine. One activity is designated as 'pretransfer' editing and involves the tRNA(Pro)-independent hydrolysis of activated Ala-AMP. The other activity is designated 'posttransfer' editing and involves deacylation of mischarged Ala-tRNA(Pro). The misacylated Cys-tRNA(Pro) is not edited by ProRS. The chain is Proline--tRNA ligase from Geobacter sulfurreducens (strain ATCC 51573 / DSM 12127 / PCA).